Here is a 90-residue protein sequence, read N- to C-terminus: Evasin P1128 (90 aa).

Residues 1 to 18 (MFIALGIQLFVAVTYAAG) form the signal peptide. Cystine bridges form between cysteine 29–cysteine 51, cysteine 33–cysteine 53, and cysteine 44–cysteine 64. N-linked (GlcNAc...) asparagine glycosylation is present at asparagine 32.

It localises to the secreted. Functionally, salivary chemokine-binding protein which binds to host chemokines CXCL1, CXCL2, CXCL3, CXCL5 and CXCL8. This Ixodes ricinus (Common tick) protein is Evasin P1128.